Reading from the N-terminus, the 497-residue chain is tRNA-2-methylthio-N(6)-dimethylallyladenosine synthase (497 aa).

Residues Arg-4–His-120 enclose the MTTase N-terminal domain. [4Fe-4S] cluster is bound by residues Cys-13, Cys-49, Cys-83, Cys-157, Cys-161, and Cys-164. In terms of domain architecture, Radical SAM core spans Arg-143 to Gln-374. Positions Arg-376 to Leu-445 constitute a TRAM domain.

The protein belongs to the methylthiotransferase family. MiaB subfamily. As to quaternary structure, monomer. Requires [4Fe-4S] cluster as cofactor.

The protein resides in the cytoplasm. The catalysed reaction is N(6)-dimethylallyladenosine(37) in tRNA + (sulfur carrier)-SH + AH2 + 2 S-adenosyl-L-methionine = 2-methylsulfanyl-N(6)-dimethylallyladenosine(37) in tRNA + (sulfur carrier)-H + 5'-deoxyadenosine + L-methionine + A + S-adenosyl-L-homocysteine + 2 H(+). Its function is as follows. Catalyzes the methylthiolation of N6-(dimethylallyl)adenosine (i(6)A), leading to the formation of 2-methylthio-N6-(dimethylallyl)adenosine (ms(2)i(6)A) at position 37 in tRNAs that read codons beginning with uridine. The polypeptide is tRNA-2-methylthio-N(6)-dimethylallyladenosine synthase (Frankia alni (strain DSM 45986 / CECT 9034 / ACN14a)).